We begin with the raw amino-acid sequence, 176 residues long: Protein GrpE (176 aa).

It belongs to the GrpE family. Homodimer.

The protein localises to the cytoplasm. Its function is as follows. Participates actively in the response to hyperosmotic and heat shock by preventing the aggregation of stress-denatured proteins, in association with DnaK and GrpE. It is the nucleotide exchange factor for DnaK and may function as a thermosensor. Unfolded proteins bind initially to DnaJ; upon interaction with the DnaJ-bound protein, DnaK hydrolyzes its bound ATP, resulting in the formation of a stable complex. GrpE releases ADP from DnaK; ATP binding to DnaK triggers the release of the substrate protein, thus completing the reaction cycle. Several rounds of ATP-dependent interactions between DnaJ, DnaK and GrpE are required for fully efficient folding. The polypeptide is Protein GrpE (Meiothermus ruber).